Reading from the N-terminus, the 309-residue chain is UPF0276 protein RB0508 (309 aa).

Belongs to the UPF0276 family.

The protein is UPF0276 protein RB0508 of Rhizobium meliloti (strain 1021) (Ensifer meliloti).